We begin with the raw amino-acid sequence, 350 residues long: MNILADALLPGLDSAFPPPFTVTLYHKADEIPELLHHKDVLLCRSTLKINGDLLKHHQIKVVATATSGTDHIDFPFLESQNISIIDAKGCNATSVADYVVACLAYLDKQQLIQGKTAGIIGLGQVGTKVYERLNAAEFQLCLYDPPKATRDTSFQSCSLEDLLECDFLCVHAELHSNAPYPSLNLINRDFLKELKPGCIIINASRGGIINEEALLHLGSAILYCTDVYNNEPHIDNRIVSRATLCTPHIAGHSLEAKFAAVAIVSRKLHQMLGLPYPQFATPEKPYRLNDDSNWRELALSIYNPIHETLELKHAGNLSSAFLTLRKNHHHRHDFTTYFDSDSIKKYPLLG.

Substrate is bound by residues Ser45 and Thr66. NAD(+) is bound by residues 124–125 (QV), Asp144, 203–205 (ASR), and Asp226. Arg205 is an active-site residue. Glu231 is a catalytic residue. The Proton donor role is filled by His248. Gly251 contributes to the NAD(+) binding site.

This sequence belongs to the D-isomer specific 2-hydroxyacid dehydrogenase family. PdxB subfamily. Homodimer.

It is found in the cytoplasm. It catalyses the reaction 4-phospho-D-erythronate + NAD(+) = (R)-3-hydroxy-2-oxo-4-phosphooxybutanoate + NADH + H(+). It functions in the pathway cofactor biosynthesis; pyridoxine 5'-phosphate biosynthesis; pyridoxine 5'-phosphate from D-erythrose 4-phosphate: step 2/5. In terms of biological role, catalyzes the oxidation of erythronate-4-phosphate to 3-hydroxy-2-oxo-4-phosphonooxybutanoate. This chain is Erythronate-4-phosphate dehydrogenase, found in Legionella pneumophila (strain Lens).